Here is a 177-residue protein sequence, read N- to C-terminus: MSRIGKKPVELPSGVSAAVSGQTIEVKGPKGARSFTATDDVTITVDGNVVSITPRGMSKRARQQWGMSRTMVANLVAGVTEGFKKELEITGVGYRANAQGNTLKLNLGYSHDVDFTVPAGVTVSTPKQTEIVVEGIDQQQVGEVAAKIREWRSPEPYKGKGIRYKGEFIFRKDGKKK.

The protein belongs to the universal ribosomal protein uL6 family. Part of the 50S ribosomal subunit.

In terms of biological role, this protein binds to the 23S rRNA, and is important in its secondary structure. It is located near the subunit interface in the base of the L7/L12 stalk, and near the tRNA binding site of the peptidyltransferase center. This is Large ribosomal subunit protein uL6 from Ruegeria pomeroyi (strain ATCC 700808 / DSM 15171 / DSS-3) (Silicibacter pomeroyi).